The following is a 977-amino-acid chain: Monofunctional C1-tetrahydrofolate synthase, mitochondrial (977 aa).

Residues Met-1–Ser-31 constitute a mitochondrion transit peptide. The segment at Cys-29–Asp-71 is disordered. The segment at Gly-32–Leu-347 is methylenetetrahydrofolate dehydrogenase and cyclohydrolase. Residue Lys-188 is modified to N6-acetyllysine; alternate. Position 188 is an N6-succinyllysine; alternate (Lys-188). Positions His-348–Phe-977 are formyltetrahydrofolate synthetase. Ser-356 is subject to Phosphoserine. Thr-422–Ser-429 contacts ATP. Lys-595 is subject to N6-succinyllysine.

It in the N-terminal section; belongs to the tetrahydrofolate dehydrogenase/cyclohydrolase family. This sequence in the C-terminal section; belongs to the formate--tetrahydrofolate ligase family. As to quaternary structure, homodimer.

It localises to the mitochondrion. The catalysed reaction is (6S)-5,6,7,8-tetrahydrofolate + formate + ATP = (6R)-10-formyltetrahydrofolate + ADP + phosphate. Its pathway is one-carbon metabolism; tetrahydrofolate interconversion. May provide the missing metabolic reaction required to link the mitochondria and the cytoplasm in the mammalian model of one-carbon folate metabolism complementing thus the enzymatic activities of MTHFD2. The polypeptide is Monofunctional C1-tetrahydrofolate synthase, mitochondrial (Mthfd1l) (Mus musculus (Mouse)).